Reading from the N-terminus, the 116-residue chain is Ribosome-binding factor A (116 aa).

This sequence belongs to the RbfA family. In terms of assembly, monomer. Binds 30S ribosomal subunits, but not 50S ribosomal subunits or 70S ribosomes.

It localises to the cytoplasm. Its function is as follows. One of several proteins that assist in the late maturation steps of the functional core of the 30S ribosomal subunit. Associates with free 30S ribosomal subunits (but not with 30S subunits that are part of 70S ribosomes or polysomes). Required for efficient processing of 16S rRNA. May interact with the 5'-terminal helix region of 16S rRNA. The protein is Ribosome-binding factor A of Buchnera aphidicola subsp. Cinara cedri (strain Cc).